The sequence spans 226 residues: ATP synthase subunit a (226 aa).

The next 6 helical transmembrane spans lie at 17-37, 79-99, 105-125, 134-154, 176-196, and 199-219; these read FSYF…AMMA, LVAT…IPGF, SLNL…FEGI, FAHF…IEIV, LFLM…AYVL, and FMAF…LAGA.

It belongs to the ATPase A chain family. F-type ATPases have 2 components, CF(1) - the catalytic core - and CF(0) - the membrane proton channel. CF(1) has five subunits: alpha(3), beta(3), gamma(1), delta(1), epsilon(1). CF(0) has three main subunits: a(1), b(2) and c(9-12). The alpha and beta chains form an alternating ring which encloses part of the gamma chain. CF(1) is attached to CF(0) by a central stalk formed by the gamma and epsilon chains, while a peripheral stalk is formed by the delta and b chains.

The protein localises to the cell inner membrane. Its function is as follows. Key component of the proton channel; it plays a direct role in the translocation of protons across the membrane. The sequence is that of ATP synthase subunit a from Campylobacter jejuni subsp. jejuni serotype O:23/36 (strain 81-176).